Here is a 446-residue protein sequence, read N- to C-terminus: Dimethylsulfoniopropionate lyase DddP (446 aa).

The segment covering 1–13 has biased composition (basic and acidic residues); it reads MNQHYSETRKIDP. The segment at 1-30 is disordered; that stretch reads MNQHYSETRKIDPSRGATLGDNTPNDNNRI. Positions 295, 297, 307, 371, 406, and 421 each coordinate a divalent metal cation.

Belongs to the peptidase M24B family. In terms of assembly, homodimer. The cofactor is a divalent metal cation.

It catalyses the reaction S,S-dimethyl-beta-propiothetin = acrylate + dimethyl sulfide + H(+). Able to cleave dimethylsulfoniopropionate (DMSP), releasing dimethyl sulfide (DMS). DMS is the principal form by which sulfur is transported from oceans to the atmosphere. The real activity of the protein is however subject to debate and it is unclear whether it constitutes a real dimethylsulfoniopropionate lyase in vivo: the low activity with DMSP as substrate suggests that DMSP is not its native substrate. This is Dimethylsulfoniopropionate lyase DddP from Roseovarius nubinhibens (strain ATCC BAA-591 / DSM 15170 / ISM).